Reading from the N-terminus, the 84-residue chain is Molybdopterin synthase sulfur carrier subunit (84 aa).

Gly-84 carries the 1-thioglycine; alternate modification. The residue at position 84 (Gly-84) is a Glycyl adenylate; alternate.

Belongs to the MoaD family. MOCS2A subfamily. In terms of assembly, heterotetramer; composed of 2 small (MOCS2A) and 2 large (MOCS2B) subunits. In terms of processing, C-terminal thiocarboxylation occurs in 2 steps, it is first acyl-adenylated (-COAMP) via the hesA/moeB/thiF part of MOCS3, then thiocarboxylated (-COSH) via the rhodanese domain of MOCS3.

It is found in the cytoplasm. The protein operates within cofactor biosynthesis; molybdopterin biosynthesis. Acts as a sulfur carrier required for molybdopterin biosynthesis. Component of the molybdopterin synthase complex that catalyzes the conversion of precursor Z into molybdopterin by mediating the incorporation of 2 sulfur atoms into precursor Z to generate a dithiolene group. In the complex, serves as sulfur donor by being thiocarboxylated (-COSH) at its C-terminus by MOCS3. After interaction with MOCS2B, the sulfur is then transferred to precursor Z to form molybdopterin. The protein is Molybdopterin synthase sulfur carrier subunit of Caenorhabditis elegans.